The sequence spans 258 residues: Hemin import ATP-binding protein HmuV (258 aa).

One can recognise an ABC transporter domain in the interval 1–238 (MLDIDVSNLS…DILERTYRTP (238 aa)). 34–41 (GENGAGKS) provides a ligand contact to ATP.

This sequence belongs to the ABC transporter superfamily. Heme (hemin) importer (TC 3.A.1.14.5) family. In terms of assembly, the complex is composed of two ATP-binding proteins (HmuV), two transmembrane proteins (HmuU) and a solute-binding protein (HmuT).

It localises to the cell inner membrane. Part of the ABC transporter complex HmuTUV involved in hemin import. Responsible for energy coupling to the transport system. This is Hemin import ATP-binding protein HmuV from Idiomarina loihiensis (strain ATCC BAA-735 / DSM 15497 / L2-TR).